Here is a 372-residue protein sequence, read N- to C-terminus: MKYDLIIIGSGSVGAAAGYYATRAGLNVLMTDAHMPPHQHGSHHGDTRLIRHAYGEGEKYVPLVLRAQTLWDELSRHNEEDPIFVRSGVINLGPADSTFLANVAHSAEQWQLNVEKLDAQGIMARWPEIRVPDNYIGLFETDSGFLRSELAIKTWIQLAKEAGCAQLFNCPVTAIRHDDDGVTIETADGDYQAKKAIVCAGTWVKDLLPELPVQPVRKVFAWYQADGRYSVKNKFPAFTGELPNGDQYYGFPAENDALKIGKHNGGQVIHSADERVPFAEVASDGSEAFPFLRNVLPGIGCCLYGAACTYDNSPDEDFIIDTLPGHDNTLLITGLSGHGFKFASVLGEIAADFAQDKKSDFDLTPFRLSRFQ.

FAD is bound at residue 4 to 34 (DLIIIGSGSVGAAAGYYATRAGLNVLMTDAH). S-8alpha-FAD cysteine is present on cysteine 308.

This sequence belongs to the MSOX/MTOX family. MTOX subfamily. As to quaternary structure, monomer. The cofactor is FAD.

It carries out the reaction N(alpha)-methyl-L-tryptophan + O2 + H2O = L-tryptophan + formaldehyde + H2O2. Catalyzes the oxidative demethylation of N-methyl-L-tryptophan. This is N-methyl-L-tryptophan oxidase from Escherichia coli O17:K52:H18 (strain UMN026 / ExPEC).